Here is a 387-residue protein sequence, read N- to C-terminus: Pepsin A-5 (387 aa).

The N-terminal stretch at 1 to 15 (MKWLWVLGLVALSEC) is a signal peptide. Positions 16 to 62 (LVKIPLMKIKSMRENLRESQVLKDYLEKYPRSRAHVLLEQRRNPAVT) are cleaved as a propeptide — activation peptide. The 311-residue stretch at 74–384 (YIGIISIGTP…DRANNRIGLA (311 aa)) folds into the Peptidase A1 domain. Residue D92 is part of the active site. 2 disulfides stabilise this stretch: C105/C110 and C266/C270. Residue D275 is part of the active site. C309 and C343 are disulfide-bonded.

This sequence belongs to the peptidase A1 family. In terms of tissue distribution, expressed in glandular chief cells of the neonatal stomach. Expressed in yolk sacs of the placenta (at protein level).

The protein localises to the secreted. It catalyses the reaction Preferential cleavage: hydrophobic, preferably aromatic, residues in P1 and P1' positions. Cleaves 1-Phe-|-Val-2, 4-Gln-|-His-5, 13-Glu-|-Ala-14, 14-Ala-|-Leu-15, 15-Leu-|-Tyr-16, 16-Tyr-|-Leu-17, 23-Gly-|-Phe-24, 24-Phe-|-Phe-25 and 25-Phe-|-Tyr-26 bonds in the B chain of insulin.. Its activity is regulated as follows. Inhibited by pepstatin A. Its function is as follows. Shows particularly broad specificity; although bonds involving phenylalanine and leucine are preferred, many others are also cleaved to some extent. May play a role as a specialized neonatal digestive enzyme. This is Pepsin A-5 from Mus musculus (Mouse).